A 477-amino-acid polypeptide reads, in one-letter code: Glutamyl-tRNA(Gln) amidotransferase subunit A (477 aa).

Active-site charge relay system residues include Lys76 and Ser151. Residue Ser175 is the Acyl-ester intermediate of the active site.

This sequence belongs to the amidase family. GatA subfamily. In terms of assembly, heterotrimer of A, B and C subunits.

It carries out the reaction L-glutamyl-tRNA(Gln) + L-glutamine + ATP + H2O = L-glutaminyl-tRNA(Gln) + L-glutamate + ADP + phosphate + H(+). In terms of biological role, allows the formation of correctly charged Gln-tRNA(Gln) through the transamidation of misacylated Glu-tRNA(Gln) in organisms which lack glutaminyl-tRNA synthetase. The reaction takes place in the presence of glutamine and ATP through an activated gamma-phospho-Glu-tRNA(Gln). This chain is Glutamyl-tRNA(Gln) amidotransferase subunit A, found in Prosthecochloris aestuarii (strain DSM 271 / SK 413).